Consider the following 482-residue polypeptide: QWRF motif-containing protein 3 (482 aa).

Over residues 1 to 20 (MKSCEHELLKTRRGKSREVS) the composition is skewed to basic and acidic residues. 2 disordered regions span residues 1–60 (MKSC…GLKK) and 171–220 (TAKP…QWAL). Low complexity predominate over residues 21–42 (SRFLSSPSASSSPNRRNSTSNS). The span at 191-219 (RTNSSKGIENRLQRNNSVSRYGSSMSQWA) shows a compositional bias: polar residues. Positions 292–295 (QWRF) match the QWRF motif motif.

Belongs to the QWRF family.

This Arabidopsis thaliana (Mouse-ear cress) protein is QWRF motif-containing protein 3 (QWRF3).